Reading from the N-terminus, the 1131-residue chain is Probable pre-mRNA-splicing factor ATP-dependent RNA helicase mog-1 (1131 aa).

Basic and acidic residues-rich tracts occupy residues 1–12 (MSDKRADGRLEG), 65–122 (RGVT…DRSG), 139–148 (WDQDDREGSS), 160–173 (RGER…DSER), 180–225 (RSER…WEEE), and 407–416 (GNYKESHQFA). 2 disordered regions span residues 1-225 (MSDK…WEEE) and 389-416 (MGVK…HQFA). The Helicase ATP-binding domain occupies 451-614 (MNVIRENNVV…FGGNCPTFTI (164 aa)). 464-471 (GETGSGKT) lines the ATP pocket. The short motif at 561-564 (DEAH) is the DEAH box element. Positions 629–812 (PVEDYVDAAV…NVVLLLKSLG (184 aa)) constitute a Helicase C-terminal domain. Basic and acidic residues-rich tracts occupy residues 1085–1114 (EMRE…RRVV) and 1121–1131 (ARSERRKLWGL). The tract at residues 1085–1131 (EMREAQKEMERRKEESDKAFKRPESSRRVVEVGSKSARSERRKLWGL) is disordered.

This sequence belongs to the DEAD box helicase family. DEAH subfamily. PRP16 sub-subfamily.

It is found in the nucleus. The enzyme catalyses ATP + H2O = ADP + phosphate + H(+). Probable ATP-binding RNA helicase involved in pre-mRNA splicing. The polypeptide is Probable pre-mRNA-splicing factor ATP-dependent RNA helicase mog-1 (mog-1) (Caenorhabditis elegans).